We begin with the raw amino-acid sequence, 38 residues long: Large ribosomal subunit protein bL36 (38 aa).

It belongs to the bacterial ribosomal protein bL36 family.

This chain is Large ribosomal subunit protein bL36, found in Anaeromyxobacter dehalogenans (strain 2CP-1 / ATCC BAA-258).